We begin with the raw amino-acid sequence, 401 residues long: Phosphoglycerate kinase (401 aa).

Substrate contacts are provided by residues 24-26, arginine 40, 63-66, arginine 122, and arginine 155; these read DFN and HFGR. Residues lysine 206, glycine 297, glutamate 328, and 357 to 360 contribute to the ATP site; that span reads GGDS.

This sequence belongs to the phosphoglycerate kinase family. In terms of assembly, monomer.

Its subcellular location is the cytoplasm. The catalysed reaction is (2R)-3-phosphoglycerate + ATP = (2R)-3-phospho-glyceroyl phosphate + ADP. It participates in carbohydrate degradation; glycolysis; pyruvate from D-glyceraldehyde 3-phosphate: step 2/5. The sequence is that of Phosphoglycerate kinase from Prochlorococcus marinus (strain NATL2A).